We begin with the raw amino-acid sequence, 719 residues long: Penicillin-binding protein 1A (719 aa).

Positions 62-223 (LIADLGSERR…NQYDPYSHPE (162 aa)) are transglycosylase. The active-site Proton donor; for transglycosylase activity is the Glu91. Residues 297 to 611 (DVYTNVDQEA…RLTPLVGNGL (315 aa)) are transpeptidase. Ser370 functions as the Acyl-ester intermediate; for transpeptidase activity in the catalytic mechanism. The tract at residues 652–719 (ARSTWSSPAP…QNQNPQPAQP (68 aa)) is disordered. Residues 654–719 (STWSSPAPQQ…QNQNPQPAQP (66 aa)) show a composition bias toward low complexity.

This sequence in the N-terminal section; belongs to the glycosyltransferase 51 family. In the C-terminal section; belongs to the transpeptidase family. Interacts with MreC in the elongasome.

The protein localises to the secreted. The catalysed reaction is [GlcNAc-(1-&gt;4)-Mur2Ac(oyl-L-Ala-gamma-D-Glu-L-Lys-D-Ala-D-Ala)](n)-di-trans,octa-cis-undecaprenyl diphosphate + beta-D-GlcNAc-(1-&gt;4)-Mur2Ac(oyl-L-Ala-gamma-D-Glu-L-Lys-D-Ala-D-Ala)-di-trans,octa-cis-undecaprenyl diphosphate = [GlcNAc-(1-&gt;4)-Mur2Ac(oyl-L-Ala-gamma-D-Glu-L-Lys-D-Ala-D-Ala)](n+1)-di-trans,octa-cis-undecaprenyl diphosphate + di-trans,octa-cis-undecaprenyl diphosphate + H(+). It carries out the reaction Preferential cleavage: (Ac)2-L-Lys-D-Ala-|-D-Ala. Also transpeptidation of peptidyl-alanyl moieties that are N-acyl substituents of D-alanine.. It functions in the pathway cell wall biogenesis; peptidoglycan biosynthesis. Cell wall formation. In Streptococcus pneumoniae (strain ATCC BAA-255 / R6), this protein is Penicillin-binding protein 1A (pbpA).